A 24-amino-acid chain; its full sequence is Attacin (24 aa).

This sequence belongs to the attacin/sarcotoxin-2 family.

It localises to the secreted. Its function is as follows. Hemolymph antibacterial protein. The sequence is that of Attacin from Heliothis virescens (Tobacco budworm moth).